Consider the following 1870-residue polypeptide: Dedicator of cytokinesis protein 5 (1870 aa).

The region spanning 8–69 (KRQKYGVAIY…PETYIHLKEA (62 aa)) is the SH3 domain. A Phosphoserine modification is found at S365. Residues 443 to 627 (RNDIYVTLIH…DSFQIATLIC (185 aa)) enclose the C2 DOCK-type domain. K818 is subject to N6-acetyllysine. Residues 1231–1642 (YKEKKREDIY…VEKHYGVITL (412 aa)) form the DOCKER domain. Residues 1679-1702 (VVSTSSNSSDNAPSRPGSDGSILE) form a disordered region. Phosphoserine occurs at positions 1756, 1766, 1785, and 1789. The disordered stretch occupies residues 1772 to 1870 (NRLSPFHGSS…GIPTSEPGSQ (99 aa)). A compositionally biased stretch (pro residues) spans 1784–1794 (QSTPLSPPPLT). T1794 bears the Phosphothreonine mark. The segment covering 1797–1808 (ATRTLSSPSLQT) has biased composition (polar residues). A Phosphothreonine modification is found at T1814. Positions 1815-1824 (PVPPPPPPKS) are enriched in pro residues. A phosphoserine mark is found at S1834 and S1869.

It belongs to the DOCK family. As to quaternary structure, interacts with CRK and CRKL. Interacts (via N-terminus) with tensin TNS3 (via N-terminus); the interaction increases DOCK5 guanine nucleotide exchange activity towards Rac. Interacts with ELMO1.

The protein resides in the cytoplasm. The protein localises to the cell membrane. It is found in the cell projection. It localises to the podosome. Its function is as follows. Guanine nucleotide exchange factor (GEF) for Rho and Rac. GEF proteins activate small GTPases by exchanging bound GDP for free GTP. Along with DOCK1, mediates CRK/CRKL regulation of epithelial and endothelial cell spreading and migration on type IV collagen. The protein is Dedicator of cytokinesis protein 5 (DOCK5) of Homo sapiens (Human).